A 197-amino-acid polypeptide reads, in one-letter code: Recombination protein RecR (197 aa).

The segment at Cys-57–Cys-72 adopts a C4-type zinc-finger fold. Residues Thr-79–Pro-174 enclose the Toprim domain.

The protein belongs to the RecR family.

In terms of biological role, may play a role in DNA repair. It seems to be involved in an RecBC-independent recombinational process of DNA repair. It may act with RecF and RecO. The chain is Recombination protein RecR from Geobacter metallireducens (strain ATCC 53774 / DSM 7210 / GS-15).